A 90-amino-acid chain; its full sequence is Probable Fe(2+)-trafficking protein (90 aa).

Belongs to the Fe(2+)-trafficking protein family.

In terms of biological role, could be a mediator in iron transactions between iron acquisition and iron-requiring processes, such as synthesis and/or repair of Fe-S clusters in biosynthetic enzymes. This chain is Probable Fe(2+)-trafficking protein, found in Bordetella bronchiseptica (strain ATCC BAA-588 / NCTC 13252 / RB50) (Alcaligenes bronchisepticus).